The chain runs to 137 residues: Large-conductance mechanosensitive channel (137 aa).

The next 2 helical transmembrane spans lie at 10–30 (FAMR…AAFG) and 76–96 (GAFI…FMAI).

It belongs to the MscL family. As to quaternary structure, homopentamer.

Its subcellular location is the cell inner membrane. In terms of biological role, channel that opens in response to stretch forces in the membrane lipid bilayer. May participate in the regulation of osmotic pressure changes within the cell. This Pectobacterium carotovorum subsp. carotovorum (strain PC1) protein is Large-conductance mechanosensitive channel.